Here is a 61-residue protein sequence, read N- to C-terminus: Beta-defensin 133 (61 aa).

Residues 1 to 23 (MKIHVFLFVLFFFLVPIATRVKC) form the signal peptide. 2 disulfides stabilise this stretch: Cys31–Cys59 and Cys38–Cys52.

It belongs to the beta-defensin family.

The protein localises to the secreted. In terms of biological role, has antibacterial activity. The sequence is that of Beta-defensin 133 (DEFB133) from Homo sapiens (Human).